The chain runs to 271 residues: 3-methyl-2-oxobutanoate hydroxymethyltransferase (271 aa).

Residues Asp50 and Asp89 each coordinate Mg(2+). Residues 50 to 51 (DS), Asp89, and Lys118 contribute to the 3-methyl-2-oxobutanoate site. Glu120 contacts Mg(2+). Residue Glu187 is the Proton acceptor of the active site.

It belongs to the PanB family. Homodecamer; pentamer of dimers. Mg(2+) is required as a cofactor.

The protein localises to the cytoplasm. It catalyses the reaction 3-methyl-2-oxobutanoate + (6R)-5,10-methylene-5,6,7,8-tetrahydrofolate + H2O = 2-dehydropantoate + (6S)-5,6,7,8-tetrahydrofolate. It participates in cofactor biosynthesis; (R)-pantothenate biosynthesis; (R)-pantoate from 3-methyl-2-oxobutanoate: step 1/2. Functionally, catalyzes the reversible reaction in which hydroxymethyl group from 5,10-methylenetetrahydrofolate is transferred onto alpha-ketoisovalerate to form ketopantoate. The sequence is that of 3-methyl-2-oxobutanoate hydroxymethyltransferase from Campylobacter concisus (strain 13826).